The following is a 234-amino-acid chain: ATP synthase subunit a 1 (234 aa).

Helical transmembrane passes span 29-49 (FLVH…VALL), 90-110 (LIAT…IPGF), 116-136 (NLNT…VVGV), 147-167 (FVGP…IGHL), 186-206 (IVLV…MMLM), and 207-227 (GILV…IYIA).

This sequence belongs to the ATPase A chain family. As to quaternary structure, F-type ATPases have 2 components, CF(1) - the catalytic core - and CF(0) - the membrane proton channel. CF(1) has five subunits: alpha(3), beta(3), gamma(1), delta(1), epsilon(1). CF(0) has three main subunits: a(1), b(2) and c(9-12). The alpha and beta chains form an alternating ring which encloses part of the gamma chain. CF(1) is attached to CF(0) by a central stalk formed by the gamma and epsilon chains, while a peripheral stalk is formed by the delta and b chains.

Its subcellular location is the cell inner membrane. Functionally, key component of the proton channel; it plays a direct role in the translocation of protons across the membrane. This chain is ATP synthase subunit a 1, found in Syntrophotalea carbinolica (strain DSM 2380 / NBRC 103641 / GraBd1) (Pelobacter carbinolicus).